Consider the following 545-residue polypeptide: Protein disulfide isomerase-like 1-3 (545 aa).

The span at 1-16 shows a compositional bias: pro residues; the sequence is MWPRAPATPPPPPWPS. Positions 1–24 are disordered; it reads MWPRAPATPPPPPWPSKPSAASRS. The 135-residue stretch at 55–189 folds into the Thioredoxin 1 domain; the sequence is ASSTAFAAAF…IVAYLKRQAG (135 aa). The N-linked (GlcNAc...) asparagine glycan is linked to Asn-87. Active-site nucleophile residues include Cys-107 and Cys-110. A disulfide bond links Cys-107 and Cys-110. Residue Asn-349 is glycosylated (N-linked (GlcNAc...) asparagine). Residues 403–545 form the Thioredoxin 2 domain; sequence FTEGTLAPHV…TTTESVKDEL (143 aa). Active-site nucleophile residues include Cys-453 and Cys-456. Cys-453 and Cys-456 are oxidised to a cystine. Positions 542-545 match the Prevents secretion from ER motif; the sequence is KDEL.

The protein belongs to the protein disulfide isomerase family.

It is found in the endoplasmic reticulum lumen. The enzyme catalyses Catalyzes the rearrangement of -S-S- bonds in proteins.. In terms of biological role, acts as a protein-folding catalyst that interacts with nascent polypeptides to catalyze the formation, isomerization, and reduction or oxidation of disulfide bonds. May play a role in storage protein biogenesis. This is Protein disulfide isomerase-like 1-3 (PDIL1-3) from Oryza sativa subsp. japonica (Rice).